The sequence spans 385 residues: Polyketide synthase 1 (385 aa).

Cysteine 157 is a catalytic residue.

Belongs to the thiolase-like superfamily. Chalcone/stilbene synthases family. Expressed in glandular trichomes.

The protein localises to the cytoplasm. In terms of biological role, polyketide synthase responsible for the biosynthesis of secondary metabolites. The sequence is that of Polyketide synthase 1 (PKSG1) from Cannabis sativa (Hemp).